The sequence spans 341 residues: N-acetyl-gamma-glutamyl-phosphate reductase (341 aa).

The active site involves Cys149.

Belongs to the NAGSA dehydrogenase family. Type 1 subfamily.

It is found in the cytoplasm. The catalysed reaction is N-acetyl-L-glutamate 5-semialdehyde + phosphate + NADP(+) = N-acetyl-L-glutamyl 5-phosphate + NADPH + H(+). The protein operates within amino-acid biosynthesis; L-arginine biosynthesis; N(2)-acetyl-L-ornithine from L-glutamate: step 3/4. Its function is as follows. Catalyzes the NADPH-dependent reduction of N-acetyl-5-glutamyl phosphate to yield N-acetyl-L-glutamate 5-semialdehyde. The sequence is that of N-acetyl-gamma-glutamyl-phosphate reductase from Methanocaldococcus jannaschii (strain ATCC 43067 / DSM 2661 / JAL-1 / JCM 10045 / NBRC 100440) (Methanococcus jannaschii).